The primary structure comprises 293 residues: Ribosomal protein L11 methyltransferase (293 aa).

S-adenosyl-L-methionine is bound by residues threonine 145, glycine 166, aspartate 188, and asparagine 230.

It belongs to the methyltransferase superfamily. PrmA family.

It is found in the cytoplasm. The enzyme catalyses L-lysyl-[protein] + 3 S-adenosyl-L-methionine = N(6),N(6),N(6)-trimethyl-L-lysyl-[protein] + 3 S-adenosyl-L-homocysteine + 3 H(+). Methylates ribosomal protein L11. This chain is Ribosomal protein L11 methyltransferase, found in Citrobacter koseri (strain ATCC BAA-895 / CDC 4225-83 / SGSC4696).